A 163-amino-acid chain; its full sequence is NF-kappa-B inhibitor-interacting Ras-like protein 2 (163 aa).

Positions 1-163 are small GTPase-like; sequence MGKSCKVVIC…SANWNLHPDH (163 aa). GTP is bound at residue 11 to 18; it reads GQHGVGKT. The Effector region motif lies at 35–43; that stretch reads MIETQEDIY. GTP is bound by residues 61-65 and 120-123; these read DTRGL and NKSD.

Belongs to the small GTPase superfamily. Ras family. KappaB-Ras subfamily.

It localises to the cytoplasm. In terms of biological role, atypical Ras-like protein that acts as a potent regulator of NF-kappa-B activity by preventing the degradation of NF-kappa-B inhibitor beta (NFKBIB) by most signals, explaining why NFKBIB is more resistant to degradation. This chain is NF-kappa-B inhibitor-interacting Ras-like protein 2 (nkiras2), found in Xenopus laevis (African clawed frog).